A 142-amino-acid chain; its full sequence is Large ribosomal subunit protein uL13 (142 aa).

The protein belongs to the universal ribosomal protein uL13 family. As to quaternary structure, part of the 50S ribosomal subunit.

In terms of biological role, this protein is one of the early assembly proteins of the 50S ribosomal subunit, although it is not seen to bind rRNA by itself. It is important during the early stages of 50S assembly. The chain is Large ribosomal subunit protein uL13 from Vesicomyosocius okutanii subsp. Calyptogena okutanii (strain HA).